The sequence spans 49 residues: uncharacterized protein (49 aa).

Residues 22-42 traverse the membrane as a helical segment; the sequence is AIVGISIMIIIAIGIYLIIEY.

Its subcellular location is the membrane. This is an uncharacterized protein from Methanocaldococcus jannaschii (strain ATCC 43067 / DSM 2661 / JAL-1 / JCM 10045 / NBRC 100440) (Methanococcus jannaschii).